The sequence spans 514 residues: M-phase inducer phosphatase 1 (514 aa).

The Phosphodegron motif lies at 73–83 (MGSSESTDSGF). At S75 the chain carries Phosphoserine; by CHEK1. Phosphoserine; by NEK11 is present on residues S78, S81, and S87. S106 bears the Phosphoserine mark. A Phosphoserine; by CHEK1 and CHEK2 modification is found at S123. The KEN box signature appears at 140–142 (KEN). S172 bears the Phosphoserine; by CHEK1 mark. The interval 256–308 (PCGSSTRAVLKRADRSHEEPPRGTKRRKSVPSPVKAKADVPEPAQLPSQSLSL) is disordered. The segment covering 266 to 277 (KRADRSHEEPPR) has biased composition (basic and acidic residues). Residues S271 and S284 each carry the phosphoserine; by CHEK1 and CHEK2 modification. S311 carries the phosphoserine modification. A Rhodanese domain is found at 366–472 (LIKEFVIIDC…FFLKCQSHCE (107 aa)). C421 is a catalytic residue. T497 carries the post-translational modification Phosphothreonine; by CHEK1. Residues S503 and S509 each carry the phosphoserine; by PLK3 modification.

Belongs to the MPI phosphatase family. As to quaternary structure, interacts with CCNB1/cyclin B1. Interacts with YWHAE/14-3-3 epsilon when phosphorylated. Interacts with CUL1 specifically when CUL1 is neddylated and active. Interacts with BTRC/BTRCP1 and FBXW11/BTRCP2. Interactions with CUL1, BTRC and FBXW11 are enhanced upon DNA damage. Interacts with CHEK2; mediates CDC25A phosphorylation and degradation in response to infrared-induced DNA damages. Interacts with HSP90AB1; prevents heat shock-mediated CDC25A degradation and contributes to cell cycle progression. In terms of processing, phosphorylated by CHEK1 on Ser-75, Ser-123, Ser-172, Ser-271, Ser-284 and Thr-497 during checkpoint mediated cell cycle arrest. Also phosphorylated by CHEK2 on Ser-123, Ser-271, and Ser-284 during checkpoint mediated cell cycle arrest. Phosphorylation on Ser-172 and Thr-497 creates binding sites for YWHAE/14-3-3 epsilon which inhibits CDC25A. Phosphorylation on Ser-75, Ser-123, Ser-172, Ser-271 and Ser-284 may also promote ubiquitin-dependent proteolysis of CDC25A by the SCF complex. Phosphorylation of CDC25A at Ser-75 by CHEK1 primes it for subsequent phosphorylation at Ser-75, Ser-81 and Ser-87 by NEK11. Phosphorylation by NEK11 is required for BTRC-mediated polyubiquitination and degradation. Phosphorylation by PIM1 leads to an increase in phosphatase activity. Phosphorylated by PLK3 following DNA damage, leading to promote its ubiquitination and degradation. Ubiquitinated by the anaphase promoting complex/cyclosome (APC/C) ubiquitin ligase complex that contains FZR1/CDH1 during G1 phase leading to its degradation by the proteasome. Ubiquitinated by a SCF complex containing BTRC and FBXW11 during S phase leading to its degradation by the proteasome. Deubiquitination by USP17L2/DUB3 leads to its stabilization. Ubiquitously expressed in most developing tissue. High levels in the testis and lower levels in the ovary, particularly in germ cells. Lower levels also in kidney, liver, heart and muscle.

It carries out the reaction O-phospho-L-tyrosyl-[protein] + H2O = L-tyrosyl-[protein] + phosphate. With respect to regulation, stimulated by B-type cyclins. Stimulated by PIM1-mediated phosphorylation. Functionally, tyrosine protein phosphatase which functions as a dosage-dependent inducer of mitotic progression. Directly dephosphorylates CDK1 and stimulates its kinase activity. Also dephosphorylates CDK2 in complex with cyclin-E, in vitro. In Mus musculus (Mouse), this protein is M-phase inducer phosphatase 1 (Cdc25a).